A 269-amino-acid chain; its full sequence is Small ribosomal subunit protein eS1 (269 aa).

Disordered regions lie at residues 1–20 (MAVG…SKKK) and 249–269 (AASG…QESV).

The protein belongs to the eukaryotic ribosomal protein eS1 family. As to quaternary structure, component of the small ribosomal subunit. Mature ribosomes consist of a small (40S) and a large (60S) subunit. The 40S subunit contains about 33 different proteins and 1 molecule of RNA (18S). The 60S subunit contains about 49 different proteins and 3 molecules of RNA (28S, 5.8S and 5S).

It is found in the cytoplasm. The polypeptide is Small ribosomal subunit protein eS1 (Anopheles darlingi (Mosquito)).